Here is a 336-residue protein sequence, read N- to C-terminus: tRNA-cytidine(32) 2-sulfurtransferase (336 aa).

Residues 1–42 (MNAPDTLTGLEANAPVTEEAPAASEAERKRAHTRREQKEQYE) form a disordered region. The PP-loop motif signature appears at 75-80 (SGGKDS). [4Fe-4S] cluster is bound by residues Cys150, Cys153, and Cys241. A disordered region spans residues 301–328 (PHGDIAFDEEPCSADSASNQTQRPSQTV). Over residues 315-328 (DSASNQTQRPSQTV) the composition is skewed to polar residues.

It belongs to the TtcA family. Homodimer. Mg(2+) is required as a cofactor. [4Fe-4S] cluster serves as cofactor.

It is found in the cytoplasm. It carries out the reaction cytidine(32) in tRNA + S-sulfanyl-L-cysteinyl-[cysteine desulfurase] + AH2 + ATP = 2-thiocytidine(32) in tRNA + L-cysteinyl-[cysteine desulfurase] + A + AMP + diphosphate + H(+). It participates in tRNA modification. Functionally, catalyzes the ATP-dependent 2-thiolation of cytidine in position 32 of tRNA, to form 2-thiocytidine (s(2)C32). The sulfur atoms are provided by the cysteine/cysteine desulfurase (IscS) system. This chain is tRNA-cytidine(32) 2-sulfurtransferase, found in Paraburkholderia phymatum (strain DSM 17167 / CIP 108236 / LMG 21445 / STM815) (Burkholderia phymatum).